The chain runs to 128 residues: Cytochrome c-type biogenesis protein CcmE (128 aa).

At 1–8 (MQKRVRNR) the chain is on the cytoplasmic side. Residues 9 to 29 (LITIIICFCSACLGISIILYN) form a helical; Signal-anchor for type II membrane protein membrane-spanning segment. The Periplasmic portion of the chain corresponds to 30 to 128 (LEKNIVFFLP…KHDENYRPPQ (99 aa)). Residues His-120 and Tyr-124 each contribute to the heme site.

Belongs to the CcmE/CycJ family.

It localises to the cell inner membrane. In terms of biological role, heme chaperone required for the biogenesis of c-type cytochromes. Transiently binds heme delivered by CcmC and transfers the heme to apo-cytochromes in a process facilitated by CcmF and CcmH. The chain is Cytochrome c-type biogenesis protein CcmE from Rickettsia conorii (strain ATCC VR-613 / Malish 7).